The primary structure comprises 419 residues: Delta(8)-fatty-acid desaturase (419 aa).

The 64-residue stretch at 1-64 (MKSKRQALSP…LKRMPKINPS (64 aa)) folds into the Cytochrome b5 heme-binding domain. Heme is bound by residues His-24 and His-47. The chain crosses the membrane as a helical span at residues 110–130 (LGVLGYFLMVQYQMYFIGAVL). The Histidine box-1 signature appears at 143–147 (HDICH). The chain crosses the membrane as a helical span at residues 156–176 (WNNLVGLVFGNGLQGFSVTCW). A Histidine box-2 motif is present at residues 180-184 (HNAHH). The next 3 helical transmembrane spans lie at 226 to 246 (YFLVICILLRFIWCFQCVLTV), 266 to 286 (IGLALHWTLKALFHLFFMPSI), and 290 to 310 (LLVFFVSELVGGFGIAIVVFM). The Histidine box-3 motif lies at 355–359 (QIEHH).

The protein belongs to the fatty acid desaturase type 1 family. It depends on Fe cation as a cofactor.

Its subcellular location is the membrane. It catalyses the reaction an (11Z,14Z)-icosadienoyl-containing glycerolipid + 2 Fe(II)-[cytochrome b5] + O2 + 2 H(+) = an (8Z,11Z,14Z)-icosatrienoyl-containing glycerolipid + 2 Fe(III)-[cytochrome b5] + 2 H2O. The catalysed reaction is an (11Z,14Z,17Z)-icosatrienoyl-containing glycerolipid + 2 Fe(II)-[cytochrome b5] + O2 + 2 H(+) = an (8Z,11Z,14Z,17Z)-eicosatetraenoyl-containing glycerolipid + 2 Fe(III)-[cytochrome b5] + 2 H2O. The enzyme catalyses an (11Z)-eicosenoyl-containing glycerolipid + 2 Fe(II)-[cytochrome b5] + O2 + 2 H(+) = a (8Z,11Z)-eicosadienoyl-containing glycerolipid + 2 Fe(III)-[cytochrome b5] + 2 H2O. It participates in lipid metabolism; fatty acid metabolism. Functionally, delta(8)-fatty-acid desaturase which introduces a double bond at the 8-position in 20-carbon chain length fatty acids (C20) that have an existing delta-11 unsaturation (double bond). Whether it acts on CoA-linked substrates (as in animals) or phospholipid-linked substrates (as in plants and fungi) is still not clear. The sequence is that of Delta(8)-fatty-acid desaturase (efd1) from Euglena gracilis.